The following is a 215-amino-acid chain: UPF0502 protein YceH (215 aa).

The residue at position 80 (Lys-80) is an N6-acetyllysine.

This sequence belongs to the UPF0502 family.

The sequence is that of UPF0502 protein YceH from Shigella flexneri serotype 5b (strain 8401).